The chain runs to 192 residues: Thymidylate kinase (192 aa).

7–14 (GIDCVGKS) lines the ATP pocket.

It belongs to the thymidylate kinase family.

It carries out the reaction dTMP + ATP = dTDP + ADP. Its function is as follows. Phosphorylation of dTMP to form dTDP in both de novo and salvage pathways of dTTP synthesis. This chain is Thymidylate kinase, found in Campylobacter jejuni subsp. jejuni serotype O:23/36 (strain 81-176).